The following is a 250-amino-acid chain: Ubiquinone/menaquinone biosynthesis C-methyltransferase UbiE (250 aa).

S-adenosyl-L-methionine is bound by residues Thr-73, Asp-94, and 122-123; that span reads DA.

This sequence belongs to the class I-like SAM-binding methyltransferase superfamily. MenG/UbiE family.

It carries out the reaction a 2-demethylmenaquinol + S-adenosyl-L-methionine = a menaquinol + S-adenosyl-L-homocysteine + H(+). It catalyses the reaction a 2-methoxy-6-(all-trans-polyprenyl)benzene-1,4-diol + S-adenosyl-L-methionine = a 5-methoxy-2-methyl-3-(all-trans-polyprenyl)benzene-1,4-diol + S-adenosyl-L-homocysteine + H(+). The protein operates within quinol/quinone metabolism; menaquinone biosynthesis; menaquinol from 1,4-dihydroxy-2-naphthoate: step 2/2. It participates in cofactor biosynthesis; ubiquinone biosynthesis. Its function is as follows. Methyltransferase required for the conversion of demethylmenaquinol (DMKH2) to menaquinol (MKH2) and the conversion of 2-polyprenyl-6-methoxy-1,4-benzoquinol (DDMQH2) to 2-polyprenyl-3-methyl-6-methoxy-1,4-benzoquinol (DMQH2). The chain is Ubiquinone/menaquinone biosynthesis C-methyltransferase UbiE from Coxiella burnetii (strain CbuK_Q154) (Coxiella burnetii (strain Q154)).